We begin with the raw amino-acid sequence, 257 residues long: Non-homologous end joining protein Ku (257 aa).

A Ku domain is found at 9 to 184 (TFGMVAIPIG…YTKPEVNEQE (176 aa)).

Belongs to the prokaryotic Ku family. As to quaternary structure, homodimer. Interacts with LigD.

With LigD forms a non-homologous end joining (NHEJ) DNA repair enzyme, which repairs dsDNA breaks with reduced fidelity. Binds linear dsDNA with 5'- and 3'- overhangs but not closed circular dsDNA nor ssDNA. Recruits and stimulates the ligase activity of LigD. This chain is Non-homologous end joining protein Ku, found in Lachnoclostridium phytofermentans (strain ATCC 700394 / DSM 18823 / ISDg) (Clostridium phytofermentans).